The chain runs to 422 residues: Tyrosine--tRNA ligase 1 (422 aa).

Tyr35 lines the L-tyrosine pocket. A 'HIGH' region motif is present at residues Pro40–His49. Residues Tyr170 and Gln174 each contribute to the L-tyrosine site. Positions Lys232–Thr236 match the 'KMSKS' region motif. Lys235 contributes to the ATP binding site. An S4 RNA-binding domain is found at Leu355–Tyr421.

This sequence belongs to the class-I aminoacyl-tRNA synthetase family. TyrS type 1 subfamily. Homodimer.

It is found in the cytoplasm. The catalysed reaction is tRNA(Tyr) + L-tyrosine + ATP = L-tyrosyl-tRNA(Tyr) + AMP + diphosphate + H(+). Catalyzes the attachment of tyrosine to tRNA(Tyr) in a two-step reaction: tyrosine is first activated by ATP to form Tyr-AMP and then transferred to the acceptor end of tRNA(Tyr). This is Tyrosine--tRNA ligase 1 from Bacillus subtilis (strain 168).